Consider the following 212-residue polypeptide: Hevein-like preproprotein (212 aa).

A signal peptide spans 1–21 (MKIRLSITIILLSYTVATVAG). Positions 22-64 (QQCGRQGGGRTCPGNICCSQYGYCGTTADYCSPTNNCQSNCWG) constitute a Chitin-binding type-1 domain. Disulfide bonds link Cys24/Cys39, Cys33/Cys45, Cys38/Cys52, Cys58/Cys62, Cys100/Cys132, Cys121/Cys155, and Cys135/Cys191. In terms of domain architecture, Barwin spans 72–193 (ESASNVRATY…VDYQFVDCGN (122 aa)).

CB-HEL interacts strongly with a fungal fruiting body lectin.

The protein localises to the vacuole. Functionally, fungal growth inhibitors. Neither CB-HEL nor CD-HEL have chitinase activity, but both have antimicrobial activities. CD-HEL has RNase, but no DNase activity. This is Hevein-like preproprotein (HEL) from Arabidopsis thaliana (Mouse-ear cress).